A 718-amino-acid polypeptide reads, in one-letter code: Pentatricopeptide repeat-containing protein At1g22960, mitochondrial (718 aa).

A mitochondrion-targeting transit peptide spans 1–11 (MILCLRLCLRA). PPR repeat units follow at residues 167 to 201 (ALKL…GFLP), 202 to 236 (SVRN…GIMP), 237 to 271 (TVIT…NIEF), 272 to 306 (SEVT…GFAV), 307 to 341 (TPYS…GIYP), 342 to 372 (TTST…MAAP), 373 to 407 (DVVS…DIHP), 408 to 442 (SIVT…LIFP), 443 to 477 (DVIT…GIKP), 478 to 512 (DGYA…DHHA), 514 to 548 (DLTI…GLVP), 549 to 583 (DHVT…RLYP), 584 to 618 (SVIT…GVRP), 619 to 653 (NVMT…GIPP), and 654 to 688 (NKYS…EIEP).

Belongs to the PPR family. P subfamily.

It localises to the mitochondrion. The chain is Pentatricopeptide repeat-containing protein At1g22960, mitochondrial from Arabidopsis thaliana (Mouse-ear cress).